Reading from the N-terminus, the 327-residue chain is Peroxidase 21 (327 aa).

The signal sequence occupies residues 1 to 28 (MANAKPFCLLGFFCLLLQLFSIFHIGNG). Intrachain disulfides connect Cys39-Cys118, Cys72-Cys77, Cys124-Cys323, and Cys204-Cys231. His70 serves as the catalytic Proton acceptor. 4 residues coordinate Ca(2+): Asp71, Val74, Asp78, and Ser80. Substrate is bound at residue Pro167. Asn170 carries an N-linked (GlcNAc...) asparagine glycan. His197 contacts heme b. Ca(2+) is bound at residue Ser198. Asp247, Thr250, and Asp255 together coordinate Ca(2+).

The protein belongs to the peroxidase family. Classical plant (class III) peroxidase subfamily. Heme b is required as a cofactor. Ca(2+) serves as cofactor. Preferentially expressed in roots and leaves, slightly in stems.

It catalyses the reaction 2 a phenolic donor + H2O2 = 2 a phenolic radical donor + 2 H2O. In terms of biological role, removal of H(2)O(2), oxidation of toxic reductants, biosynthesis and degradation of lignin, suberization, auxin catabolism, response to environmental stresses such as wounding, pathogen attack and oxidative stress. These functions might be dependent on each isozyme/isoform in each plant tissue. Functionally, might function as heat shock-like defense protein. May be implicated in the systemic acquired resistance response. This is Peroxidase 21 (PER21) from Arabidopsis thaliana (Mouse-ear cress).